The sequence spans 504 residues: Pyrichalasin C-7 hydroxylase (504 aa).

Residues 1 to 17 (MLNSAACIVLAITAVLG) form the signal peptide. Heme is bound at residue cysteine 449.

Belongs to the cytochrome P450 family. Heme is required as a cofactor.

The protein operates within mycotoxin biosynthesis. Functionally, cytochrome P450 monooxygenase; part of the gene cluster that mediates the biosynthesis of the mycotoxin pyrichalasin H, a tyrosine-derived cytochalasan that inhibits the growth of rice seedlings, but also inhibits lymphocyte capping and actin polymerization and alters cell morphology. Pyrichalasin H is indicated as the responsible agent for the genus-specific pathogenicity of M.grisea toward crabgrass. The first step in the pathway is catalyzed by the O-methyltransferase pyiA which methylates free tyrosine to generate the precursor O-methyltyrosine. The hybrid PKS-NRPS pyiS, assisted by the enoyl reductase pyiC, are responsible for fusion of the O-methyltyrosine precursor and the polyketide backbone. The polyketide synthase module (PKS) of pyiS is responsible for the synthesis of the polyketide backbone and the downstream nonribosomal peptide synthetase (NRPS) amidates the carboxyl end of the polyketide with the O-methyltyrosine precursor. As the NRPS A-domain demonstrates substrate tolerance, pyiS can also use phenylalanine, tyrosine and even para-chlorophenylalanine as amino acid precursor, which leads to the production of novel cytochalasans, including halogenated cytochalasans. Because pyiS lacks a designated enoylreductase (ER) domain, the required activity is provided the enoyl reductase pyiC. Reduction by the hydrolyase pyiE leads to 1,5-dihydropyrrolone, which is substrate for dehydration and intra-molecular Diels-Alder cyclization by the Diels-Alderase pyiF to yield the required isoindolone-fused macrocycle. The tailoring cytochrome P450 monooxygenases piyD and piyG catalyze the hydroxylation at C-18 and C-7, respectivily, whereas the short-chain dehydrogenase/reductase pyiH reduces the carbonyl at C-21 in preparation for the transfer of an acetyl group by the acetyltransferase pyiB. These 3 reactions whose order is not clear yet, lead to the production of O-methylpyrichalasin J, a deacetylated pyrichalasin H. Finally, pyiB to converts O-methylpyrichalasin J into the final product pyrichalasin H via acetylation of C-21. This Pyricularia grisea (Crabgrass-specific blast fungus) protein is Pyrichalasin C-7 hydroxylase.